Reading from the N-terminus, the 153-residue chain is 6,7-dimethyl-8-ribityllumazine synthase (153 aa).

Residues F22, 56–58 (AFE), and 80–82 (TVI) each bind 5-amino-6-(D-ribitylamino)uracil. 85-86 (ST) lines the (2S)-2-hydroxy-3-oxobutyl phosphate pocket. The active-site Proton donor is the H88. F113 contributes to the 5-amino-6-(D-ribitylamino)uracil binding site. (2S)-2-hydroxy-3-oxobutyl phosphate is bound at residue R127.

It belongs to the DMRL synthase family. As to quaternary structure, forms an icosahedral capsid composed of 60 subunits, arranged as a dodecamer of pentamers.

It catalyses the reaction (2S)-2-hydroxy-3-oxobutyl phosphate + 5-amino-6-(D-ribitylamino)uracil = 6,7-dimethyl-8-(1-D-ribityl)lumazine + phosphate + 2 H2O + H(+). It functions in the pathway cofactor biosynthesis; riboflavin biosynthesis; riboflavin from 2-hydroxy-3-oxobutyl phosphate and 5-amino-6-(D-ribitylamino)uracil: step 1/2. Functionally, catalyzes the formation of 6,7-dimethyl-8-ribityllumazine by condensation of 5-amino-6-(D-ribitylamino)uracil with 3,4-dihydroxy-2-butanone 4-phosphate. This is the penultimate step in the biosynthesis of riboflavin. The chain is 6,7-dimethyl-8-ribityllumazine synthase from Haemophilus ducreyi (strain 35000HP / ATCC 700724).